A 513-amino-acid polypeptide reads, in one-letter code: Putative thymidine phosphorylase (513 aa).

The protein belongs to the thymidine/pyrimidine-nucleoside phosphorylase family. Type 2 subfamily.

The catalysed reaction is thymidine + phosphate = 2-deoxy-alpha-D-ribose 1-phosphate + thymine. The protein is Putative thymidine phosphorylase of Bradyrhizobium diazoefficiens (strain JCM 10833 / BCRC 13528 / IAM 13628 / NBRC 14792 / USDA 110).